A 140-amino-acid polypeptide reads, in one-letter code: Transcription antitermination protein NusB (140 aa).

It belongs to the NusB family.

Functionally, involved in transcription antitermination. Required for transcription of ribosomal RNA (rRNA) genes. Binds specifically to the boxA antiterminator sequence of the ribosomal RNA (rrn) operons. This is Transcription antitermination protein NusB from Streptococcus pneumoniae (strain 70585).